A 79-amino-acid polypeptide reads, in one-letter code: Small ribosomal subunit protein bS18 (79 aa).

This sequence belongs to the bacterial ribosomal protein bS18 family. In terms of assembly, part of the 30S ribosomal subunit. Forms a tight heterodimer with protein bS6.

Functionally, binds as a heterodimer with protein bS6 to the central domain of the 16S rRNA, where it helps stabilize the platform of the 30S subunit. In Rhodopseudomonas palustris (strain BisB5), this protein is Small ribosomal subunit protein bS18.